The sequence spans 507 residues: tRNA(Ile)-lysidine synthase (507 aa).

24 to 29 lines the ATP pocket; it reads SGGGDS. Residues 370–500 enclose the CMP/dCMP-type deaminase domain; the sequence is PPEEAHMAEA…KLLRDFFARL (131 aa). Positions 420, 445, and 448 each coordinate Zn(2+).

This sequence belongs to the tRNA(Ile)-lysidine synthase family.

The protein resides in the cytoplasm. It catalyses the reaction cytidine(34) in tRNA(Ile2) + L-lysine + ATP = lysidine(34) in tRNA(Ile2) + AMP + diphosphate + H(+). Its function is as follows. Ligates lysine onto the cytidine present at position 34 of the AUA codon-specific tRNA(Ile) that contains the anticodon CAU, in an ATP-dependent manner. Cytidine is converted to lysidine, thus changing the amino acid specificity of the tRNA from methionine to isoleucine. The sequence is that of tRNA(Ile)-lysidine synthase (tilS) from Thermus thermophilus (strain ATCC BAA-163 / DSM 7039 / HB27).